Consider the following 935-residue polypeptide: Coiled-coil domain-containing protein 66 (935 aa).

Polar residues predominate over residues 76 to 96; sequence LDTSQAKPENSRLTFSPSTDK. Residues 76 to 103 are disordered; it reads LDTSQAKPENSRLTFSPSTDKQYSEKDS. Residue threonine 114 is modified to Phosphothreonine. Residue serine 366 is modified to Phosphoserine. A coiled-coil region spans residues 462–555; it reads LEHQKAIMAQ…EQRIRELAQK (94 aa). Disordered stretches follow at residues 470–491, 577–602, and 738–794; these read AQVE…KEEQ, TISS…DTGV, and ENLS…RTQQ. The segment covering 473-491 has biased composition (basic and acidic residues); that stretch reads EENRRKKRLEEEQRKKEEQ. Positions 567–935 are mediates localization to cilia, centrosomes and spindle microtubules and the interaction with PCM1, CEP290, CEP104 and CSPP1; sequence GAQVDYKAFT…NQEDNFSSSF (369 aa). The segment covering 590-602 has biased composition (polar residues); that stretch reads DTSTASPKKDTGV. Residue serine 595 is modified to Phosphoserine. Basic and acidic residues predominate over residues 752–782; sequence SHRETESESRLHLIKKVEEPLKTPSVSKERF. Over residues 783 to 794 the composition is skewed to polar residues; it reads QTSPAVKNRTQQ.

In terms of assembly, homodimer; disulfide-linked. Interacts with CEP290. Interacts with PCM1. Interacts with ARMC9, TOGARAM1, CSPP1 and CEP104. Interacts with CDK5RAP2, CEP152, CEP192, TBG1 and PRC1. As to expression, widely expressed. Expressed in retina by rod photoreceptors but also detected in outer plexiform and ganglion cell layers (at protein level).

The protein resides in the cytoplasm. It localises to the cytoskeleton. Its subcellular location is the microtubule organizing center. The protein localises to the centrosome. It is found in the centriolar satellite. The protein resides in the cell projection. It localises to the cilium. Its subcellular location is the cilium basal body. The protein localises to the cilium axoneme. It is found in the photoreceptor inner segment. The protein resides in the photoreceptor outer segment. In terms of biological role, microtubule-binding protein required for ciliogenesis. May function in ciliogenesis by mediating the transport of proteins like BBS4 to the cilium, but also through the organization of the centriolar satellites. Required for the assembly of signaling-competent cilia with proper structure and length. Mediates this function in part by regulating transition zone assembly and basal body recruitment of the IFT-B complex. Cooperates with the ciliopathy proteins CSPP1 and CEP104 during cilium length regulation. Plays two important roles during cell division. First, is required for mitotic progression via regulation of spindle assembly, organization and orientation, levels of spindle microtubules (MTs), kinetochore-fiber integrity, and chromosome alignment. Second, functions during cytokinesis in part by regulating assembly and organization of central spindle and midbody MTs. Plays a role in retina morphogenesis and/or homeostasis. The polypeptide is Coiled-coil domain-containing protein 66 (Mus musculus (Mouse)).